Consider the following 102-residue polypeptide: Urease subunit beta (102 aa).

It belongs to the urease beta subunit family. As to quaternary structure, heterotrimer of UreA (gamma), UreB (beta) and UreC (alpha) subunits. Three heterotrimers associate to form the active enzyme.

The protein localises to the cytoplasm. The catalysed reaction is urea + 2 H2O + H(+) = hydrogencarbonate + 2 NH4(+). It functions in the pathway nitrogen metabolism; urea degradation; CO(2) and NH(3) from urea (urease route): step 1/1. The sequence is that of Urease subunit beta from Alteromonas mediterranea (strain DSM 17117 / CIP 110805 / LMG 28347 / Deep ecotype).